Here is a 471-residue protein sequence, read N- to C-terminus: Anthocyanidin 3-O-glucosyltransferase (471 aa).

Residue His-24 is the Proton acceptor of the active site. His-24 contributes to the an anthocyanidin binding site. The Charge relay role is filled by Asp-130. Position 152 (Thr-152) interacts with UDP-alpha-D-glucose. His-161 is a binding site for an anthocyanidin. UDP-alpha-D-glucose contacts are provided by Ala-352, Gln-354, His-369, Trp-372, Ser-374, and Glu-377. Position 392 (Gly-392) interacts with an anthocyanidin. Residues Asp-393 and Gln-394 each contribute to the UDP-alpha-D-glucose site.

Belongs to the UDP-glycosyltransferase family.

The enzyme catalyses an anthocyanidin + UDP-alpha-D-glucose + H(+) = an anthocyanidin 3-O-beta-D-glucoside + UDP. It participates in pigment biosynthesis; anthocyanin biosynthesis. In the presence of other necessary color factors, this glycosylation reaction allows the accumulation of anthocyanin pigments. In Zea mays (Maize), this protein is Anthocyanidin 3-O-glucosyltransferase (BZ1).